A 605-amino-acid chain; its full sequence is Elongation factor 4 (605 aa).

The 183-residue stretch at 10–192 (KNIRNFAIVA…AIVMRLPPPH (183 aa)) folds into the tr-type G domain. GTP-binding positions include 22–27 (DHGKST) and 139–142 (NKVD).

The protein belongs to the TRAFAC class translation factor GTPase superfamily. Classic translation factor GTPase family. LepA subfamily.

It localises to the cell inner membrane. It catalyses the reaction GTP + H2O = GDP + phosphate + H(+). Functionally, required for accurate and efficient protein synthesis under certain stress conditions. May act as a fidelity factor of the translation reaction, by catalyzing a one-codon backward translocation of tRNAs on improperly translocated ribosomes. Back-translocation proceeds from a post-translocation (POST) complex to a pre-translocation (PRE) complex, thus giving elongation factor G a second chance to translocate the tRNAs correctly. Binds to ribosomes in a GTP-dependent manner. The sequence is that of Elongation factor 4 from Chelativorans sp. (strain BNC1).